The following is a 342-amino-acid chain: Heat-inducible transcription repressor HrcA (342 aa).

It belongs to the HrcA family.

Functionally, negative regulator of class I heat shock genes (grpE-dnaK-dnaJ and groELS operons). Prevents heat-shock induction of these operons. The sequence is that of Heat-inducible transcription repressor HrcA from Leptospira interrogans serogroup Icterohaemorrhagiae serovar copenhageni (strain Fiocruz L1-130).